We begin with the raw amino-acid sequence, 737 residues long: Translation initiation factor IF-2 (737 aa).

Positions 55 to 152 (KKKEHIQHNK…PVPPRKNKPL (98 aa)) are disordered. Positions 60–70 (IQHNKNKDNFH) are enriched in basic and acidic residues. Basic residues predominate over residues 88 to 98 (KNVHKNNRKRS). The span at 105-121 (NNNAKNGQRNNRNNRSN) shows a compositional bias: low complexity. Over residues 122–131 (NKFKNKRNNN) the composition is skewed to basic residues. Positions 132–142 (NKRNNNFKKGN) are enriched in low complexity. Positions 238 to 407 (KRPPVVTIMG…LLEAEMLELH (170 aa)) constitute a tr-type G domain. Residues 247-254 (GHVDHGKT) form a G1 region. 247 to 254 (GHVDHGKT) is a binding site for GTP. Positions 272 to 276 (GITQH) are G2. Residues 293–296 (DTPG) are G3. Residues 293-297 (DTPGH) and 347-350 (NKID) each bind GTP. The G4 stretch occupies residues 347 to 350 (NKID). Residues 383–385 (SAK) are G5.

It belongs to the TRAFAC class translation factor GTPase superfamily. Classic translation factor GTPase family. IF-2 subfamily.

The protein localises to the cytoplasm. In terms of biological role, one of the essential components for the initiation of protein synthesis. Protects formylmethionyl-tRNA from spontaneous hydrolysis and promotes its binding to the 30S ribosomal subunits. Also involved in the hydrolysis of GTP during the formation of the 70S ribosomal complex. This chain is Translation initiation factor IF-2, found in Ligilactobacillus salivarius (strain UCC118) (Lactobacillus salivarius).